The following is a 341-amino-acid chain: GTP 3',8-cyclase (341 aa).

The 219-residue stretch at 17 to 235 (TYGRVATDLR…LRTRFELTAE (219 aa)) folds into the Radical SAM core domain. GTP is bound at residue Arg26. Cys33 and Cys37 together coordinate [4Fe-4S] cluster. Tyr39 is a binding site for S-adenosyl-L-methionine. Residue Cys40 coordinates [4Fe-4S] cluster. Arg77 provides a ligand contact to GTP. Gly81 contacts S-adenosyl-L-methionine. GTP is bound at residue Thr108. Residue Ser132 coordinates S-adenosyl-L-methionine. Position 169 (Lys169) interacts with GTP. An S-adenosyl-L-methionine-binding site is contributed by Met203. The [4Fe-4S] cluster site is built by Cys268 and Cys271. Residue 273 to 275 (RTR) coordinates GTP. Cys285 lines the [4Fe-4S] cluster pocket.

The protein belongs to the radical SAM superfamily. MoaA family. As to quaternary structure, monomer and homodimer. It depends on [4Fe-4S] cluster as a cofactor.

The enzyme catalyses GTP + AH2 + S-adenosyl-L-methionine = (8S)-3',8-cyclo-7,8-dihydroguanosine 5'-triphosphate + 5'-deoxyadenosine + L-methionine + A + H(+). It participates in cofactor biosynthesis; molybdopterin biosynthesis. Its function is as follows. Catalyzes the cyclization of GTP to (8S)-3',8-cyclo-7,8-dihydroguanosine 5'-triphosphate. The chain is GTP 3',8-cyclase from Streptomyces coelicolor (strain ATCC BAA-471 / A3(2) / M145).